Consider the following 281-residue polypeptide: 18S rRNA (guanine-N(7))-methyltransferase (281 aa).

A disordered region spans residues 256–281 (KARRRRQGKEVCPDTQYTGRKRKPRF).

This sequence belongs to the class I-like SAM-binding methyltransferase superfamily. BUD23/WBSCR22 family. As to quaternary structure, heterodimer with TRMT112; this heterodimerization is necessary for the metabolic stability and activity of the catalytic subunit BUD23. Interacts with GRIP1. Post-translationally, may be ubiquitinated and targeted to degradation in response to pro-inflammatory cytokine signaling.

It localises to the nucleus. It is found in the nucleoplasm. The protein resides in the cytoplasm. Its subcellular location is the perinuclear region. It carries out the reaction a guanosine in 18S rRNA + S-adenosyl-L-methionine = an N(7)-methylguanosine in 18S rRNA + S-adenosyl-L-homocysteine. Its function is as follows. S-adenosyl-L-methionine-dependent methyltransferase that specifically methylates the N(7) position of a guanine in 18S rRNA. Requires the methyltransferase adapter protein TRM112 for full rRNA methyltransferase activity. Involved in the pre-rRNA processing steps leading to small-subunit rRNA production independently of its RNA-modifying catalytic activity. Important for biogenesis end export of the 40S ribosomal subunit independent on its methyltransferase activity. Locus-specific steroid receptor coactivator. Potentiates transactivation by glucocorticoid (NR3C1), mineralocorticoid (NR3C2), androgen (AR) and progesterone (PGR) receptors. Required for the maintenance of open chromatin at the TSC22D3/GILZ locus to facilitate NR3C1 loading on the response elements. Required for maintenance of dimethylation on histone H3 'Lys-79' (H3K79me2), although direct histone methyltransferase activity is not observed in vitro. The sequence is that of 18S rRNA (guanine-N(7))-methyltransferase from Bos taurus (Bovine).